Reading from the N-terminus, the 505-residue chain is Activin receptor type-1B (505 aa).

Residues 1–23 (MAESAGASSFFPLVVLLLAGSGG) form the signal peptide. Residues 24-126 (SGPRGIQALL…EHPSMWGPVE (103 aa)) are Extracellular-facing. Asparagine 43 is a glycosylation site (N-linked (GlcNAc...) asparagine). Residues 127–149 (LVGIIAGPVFLLFLIIIIVFLVI) traverse the membrane as a helical segment. At 150 to 505 (NYHQRVYHNR…QLSVQEDVKI (356 aa)) the chain is on the cytoplasmic side. A GS domain is found at 177 to 206 (KTLQDLVYDLSTSGSGSGLPLFVQRTVART). The Protein kinase domain occupies 207–497 (IVLQEIIGKG…LRIKKTLSQL (291 aa)). ATP is bound by residues 213–221 (IGKGRFGEV) and lysine 234. The Proton acceptor role is filled by aspartate 335. The residue at position 380 (tyrosine 380) is a Phosphotyrosine.

Belongs to the protein kinase superfamily. TKL Ser/Thr protein kinase family. TGFB receptor subfamily. Forms an activin receptor complex with activin receptor type-2 (ACVR2A or ACVR2B). Part of a complex consisting of MAGI2/ARIP1, ACVR2A, ACVR1B and SMAD3. Interacts with SMAD2 and SMAD3. Interacts with SMAD7. Interacts with FKBP1A. Interacts with IGSF1. Interacts with CRIPTO. Interacts with TDP2. Interacts with TSC22D1/TSC-22. The cofactor is Mg(2+). Mn(2+) serves as cofactor. Autophosphorylated. Phosphorylated by activin receptor type-2 (ACVR2A or ACVR2B) in response to activin-binding at serine and threonine residues in the GS domain. Phosphorylation of ACVR1B by activin receptor type-2 regulates association with SMAD7. Post-translationally, ubiquitinated. Level of ubiquitination is regulated by the SMAD7-SMURF1 complex. In terms of processing, ubiquitinated. In terms of tissue distribution, urogenital ridge, testis, ovary, brain and lungs.

It is found in the cell membrane. It catalyses the reaction L-threonyl-[receptor-protein] + ATP = O-phospho-L-threonyl-[receptor-protein] + ADP + H(+). The enzyme catalyses L-seryl-[receptor-protein] + ATP = O-phospho-L-seryl-[receptor-protein] + ADP + H(+). Its activity is regulated as follows. Activin receptor type-2 (ACVR2A or ACVR2B) activates the type-1 receptor through phosphorylation of its regulatory GS domain. In terms of biological role, transmembrane serine/threonine kinase activin type-1 receptor forming an activin receptor complex with activin receptor type-2 (ACVR2A or ACVR2B). Transduces the activin signal from the cell surface to the cytoplasm and is thus regulating a many physiological and pathological processes including neuronal differentiation and neuronal survival, hair follicle development and cycling, FSH production by the pituitary gland, wound healing, extracellular matrix production, immunosuppression and carcinogenesis. Activin is also thought to have a paracrine or autocrine role in follicular development in the ovary. Within the receptor complex, type-2 receptors (ACVR2A and/or ACVR2B) act as a primary activin receptors whereas the type-1 receptors like ACVR1B act as downstream transducers of activin signals. Activin binds to type-2 receptor at the plasma membrane and activates its serine-threonine kinase. The activated receptor type-2 then phosphorylates and activates the type-1 receptor such as ACVR1B. Once activated, the type-1 receptor binds and phosphorylates the SMAD proteins SMAD2 and SMAD3, on serine residues of the C-terminal tail. Soon after their association with the activin receptor and subsequent phosphorylation, SMAD2 and SMAD3 are released into the cytoplasm where they interact with the common partner SMAD4. This SMAD complex translocates into the nucleus where it mediates activin-induced transcription. Inhibitory SMAD7, which is recruited to ACVR1B through FKBP1A, can prevent the association of SMAD2 and SMAD3 with the activin receptor complex, thereby blocking the activin signal. Activin signal transduction is also antagonized by the binding to the receptor of inhibin-B via the IGSF1 inhibin coreceptor. ACVR1B also phosphorylates TDP2. This is Activin receptor type-1B (Acvr1b) from Rattus norvegicus (Rat).